The sequence spans 234 residues: Putative lipoyltransferase 2, mitochondrial (234 aa).

Residues 1-28 (MPFVRPLVTVVRAGRHSYSAGLQLQQRL) constitute a mitochondrion transit peptide. One can recognise a BPL/LPL catalytic domain in the interval 39 to 220 (AEFRNYLVLQ…SFAKVFECRL (182 aa)). Substrate-binding positions include 83–90 (RGGLITFH), 150–152 (AIG), and 163–165 (GIG). Cys-181 functions as the Acyl-thioester intermediate in the catalytic mechanism.

It belongs to the LipB family.

The protein localises to the mitochondrion. It carries out the reaction octanoyl-[ACP] + L-lysyl-[protein] = N(6)-octanoyl-L-lysyl-[protein] + holo-[ACP] + H(+). The protein operates within protein modification; protein lipoylation via endogenous pathway; protein N(6)-(lipoyl)lysine from octanoyl-[acyl-carrier-protein]: step 1/2. Functionally, catalyzes the transfer of endogenously produced octanoic acid from octanoyl-acyl-carrier-protein onto the lipoyl domains of lipoate-dependent enzymes. Lipoyl-ACP can also act as a substrate although octanoyl-ACP is likely to be the physiological substrate. This is Putative lipoyltransferase 2, mitochondrial from Drosophila melanogaster (Fruit fly).